The primary structure comprises 469 residues: Probable Xaa-Pro aminopeptidase AN0832 (469 aa).

Positions 260, 271, 398, and 437 each coordinate Mn(2+).

Belongs to the peptidase M24B family. Mn(2+) serves as cofactor.

It carries out the reaction Release of any N-terminal amino acid, including proline, that is linked to proline, even from a dipeptide or tripeptide.. Its function is as follows. Catalyzes the removal of a penultimate prolyl residue from the N-termini of peptides. In Emericella nidulans (strain FGSC A4 / ATCC 38163 / CBS 112.46 / NRRL 194 / M139) (Aspergillus nidulans), this protein is Probable Xaa-Pro aminopeptidase AN0832.